The chain runs to 261 residues: Triosephosphate isomerase (261 aa).

Substrate is bound at residue 10-12 (NWK). Catalysis depends on H100, which acts as the Electrophile. Residue E172 is the Proton acceptor of the active site. Residues G178, S218, and 239–240 (GG) each bind substrate.

The protein belongs to the triosephosphate isomerase family. In terms of assembly, homodimer.

It is found in the cytoplasm. The enzyme catalyses D-glyceraldehyde 3-phosphate = dihydroxyacetone phosphate. It participates in carbohydrate biosynthesis; gluconeogenesis. The protein operates within carbohydrate degradation; glycolysis; D-glyceraldehyde 3-phosphate from glycerone phosphate: step 1/1. Involved in the gluconeogenesis. Catalyzes stereospecifically the conversion of dihydroxyacetone phosphate (DHAP) to D-glyceraldehyde-3-phosphate (G3P). The chain is Triosephosphate isomerase from Rhodococcus jostii (strain RHA1).